A 208-amino-acid chain; its full sequence is Cysteine-rich protein 2 (208 aa).

An LIM zinc-binding 1 domain is found at 5–57 (CPKCDKTVYFAEKVSSLGKDWHKFCLKCERCNKTLTPGGHAEHDGKPFCHKPC). K23 carries the N6-acetyllysine modification. Residue S104 is modified to Phosphoserine. One can recognise an LIM zinc-binding 2 domain in the interval 126–178 (CPRCNKRVYFAEKVTSLGKDWHRPCLRCERCSKTLTPGGHAEHDGQPYCHKPC). N6-acetyllysine occurs at positions 138 and 144.

As to quaternary structure, interacts with TGFB1I1.

The polypeptide is Cysteine-rich protein 2 (Crip2) (Mus musculus (Mouse)).